We begin with the raw amino-acid sequence, 524 residues long: MSDPFFTRPEHRKRKARSATSKREKENQKLERNGPANEDLASISSESEFNGFEDEIDEENEDTYETAAEKRLRLAREYLDEVKNELVEDGGFDAKEVDRELLASRLKEDVLEKKGQMYLDYTSKINPDVKIETAQLRGRHMRPLVGVVAYENFVYSADKSGLIQKWEALQEKDTENRENDDHEIGKAIKLHFRPIKFSRSRRGENDHVKEITCLAISNDGRWIVTGGLDHRIVIRDSVTLEPQHCWKHHRDAVMGLAMRRGTNEMFSCSADRSIKVWSLDQMSYIETLFGHQDVIFGVDALARERCVSVGGRDRTSRLWKIVEESQLVFRSGGTSMKATAGYMEGSVDCVAMIDEDHFVTGSDNGVIALWSVQRKKPLFTYPLAHGLDPILAPGRHSAETSPDPVTIPPQPRWITSLAAIPYSNLFASGSWDGNIRLWKIAEGLRSFEPLTIATPLSVYGCINSLSLSLQGKGKQSEVRVFAACGRETRVGRWKTLRGIPNSGFVFNIPLTVIPSVTDGDEIDE.

The segment at 1–65 (MSDPFFTRPE…IDEENEDTYE (65 aa)) is disordered. Basic and acidic residues predominate over residues 21 to 32 (SKREKENQKLER). Residues 51-64 (GFEDEIDEENEDTY) show a composition bias toward acidic residues. 7 WD repeats span residues 131-176 (IETA…DTEN), 206-245 (DHVK…PQHC), 248-287 (HHRD…YIET), 290-329 (GHQD…QLVF), 342-380 (YMEG…PLFT), 409-448 (PQPR…RSFE), and 457-503 (SVYG…PNSG).

The protein resides in the nucleus. This is an uncharacterized protein from Schizosaccharomyces pombe (strain 972 / ATCC 24843) (Fission yeast).